Reading from the N-terminus, the 325-residue chain is Protein ORANGE-ORANGE, chloroplastic (325 aa).

The N-terminal 54 residues, 1-54 (MDRVLVASYPINHLIRPHSFRIDYCWSTCFTSRLNSGKERQKLSSRWRWRSMAS), are a transit peptide targeting the chloroplast. Residues 53–71 (ASDSTDSSSSSSFAPSVES) show a composition bias toward low complexity. Residues 53–77 (ASDSTDSSSSSSFAPSVESDPSDKT) form a disordered region. 2 consecutive transmembrane segments (helical) span residues 164–184 (LYYVTCYSLIAGIILFGGLLA) and 217–237 (IVASFSGGAVGVISALMVVEV). The CR-type-like stretch occupies residues 226–317 (VGVISALMVV…CTGMAMASEH (92 aa)). One copy of the CXXCXGXG motif repeat lies at 248–255 (CKYCLGTG). A CXXCXXXG motif repeat occupies 259–266 (CARCSNTG). Residues 292–299 (CQNCSGSG) form a CXXCXGXG motif repeat. Residues 303–310 (CPTCLCTG) form a CXXCXXXG motif repeat.

The protein belongs to the orange-like family.

The protein resides in the plastid. Its subcellular location is the chloroplast membrane. In terms of biological role, triggers accumulation of carotenoids, mainly beta-carotene, in fruit flesh. This Cucumis melo (Muskmelon) protein is Protein ORANGE-ORANGE, chloroplastic.